The chain runs to 338 residues: D-erythrose-4-phosphate dehydrogenase (338 aa).

11–12 (RI) contacts NAD(+). Substrate contacts are provided by residues 153-155 (SCT), Arg199, 212-213 (TK), and Arg235. The Nucleophile role is filled by Cys154. Asn317 lines the NAD(+) pocket.

The protein belongs to the glyceraldehyde-3-phosphate dehydrogenase family. Epd subfamily. Homotetramer.

It localises to the cytoplasm. The catalysed reaction is D-erythrose 4-phosphate + NAD(+) + H2O = 4-phospho-D-erythronate + NADH + 2 H(+). It functions in the pathway cofactor biosynthesis; pyridoxine 5'-phosphate biosynthesis; pyridoxine 5'-phosphate from D-erythrose 4-phosphate: step 1/5. Its function is as follows. Catalyzes the NAD-dependent conversion of D-erythrose 4-phosphate to 4-phosphoerythronate. The protein is D-erythrose-4-phosphate dehydrogenase of Shewanella amazonensis (strain ATCC BAA-1098 / SB2B).